We begin with the raw amino-acid sequence, 1848 residues long: Autophagy-related protein 2 (1848 aa).

Disordered regions lie at residues 129–168, 237–274, 386–417, 494–540, and 1717–1737; these read DSDSAAEDESDDTDEEIVVEPKKSRSSSSSSFSGSTSKPS, PGELVEKVVQSPQKDDTSDNEEDDSNYEDDNNDYGDES, LKRQQNSRFPQYAETTDELTDDEASSKDGENT, TAAT…GSKS, and DDNSKKEGEEDEADDSSADEE. Over residues 132–146 the composition is skewed to acidic residues; sequence SAAEDESDDTDEEIV. Over residues 154-168 the composition is skewed to low complexity; that stretch reads SSSSSSFSGSTSKPS. Residues 254-274 show a composition bias toward acidic residues; it reads SDNEEDDSNYEDDNNDYGDES. A compositionally biased stretch (polar residues) spans 494 to 507; it reads TAATHAEQSQSQPD. A compositionally biased stretch (low complexity) spans 525–540; the sequence is MSPSSISSMSSSGSKS. A compositionally biased stretch (acidic residues) spans 1725–1737; sequence EEDEADDSSADEE.

Belongs to the ATG2 family.

The protein resides in the preautophagosomal structure membrane. Its subcellular location is the endoplasmic reticulum membrane. The catalysed reaction is a 1,2-diacyl-sn-glycero-3-phosphocholine(in) = a 1,2-diacyl-sn-glycero-3-phosphocholine(out). The enzyme catalyses a 1,2-diacyl-sn-glycero-3-phospho-L-serine(in) = a 1,2-diacyl-sn-glycero-3-phospho-L-serine(out). It catalyses the reaction a 1,2-diacyl-sn-glycero-3-phosphoethanolamine(in) = a 1,2-diacyl-sn-glycero-3-phosphoethanolamine(out). Its function is as follows. Lipid transfer protein required for autophagosome completion and peroxisome degradation. Tethers the edge of the isolation membrane (IM) to the endoplasmic reticulum (ER) and mediates direct lipid transfer from ER to IM for IM expansion. ATG2 binds to the ER exit site (ERES), which is the membrane source for autophagosome formation, using basic residues in its N-terminal region (NR) and to the expanding edge of the IM through its C-terminal region. The latter binding is assisted by an ATG18-PtdIns3P interaction. ATG2 then extracts phospholipids from the membrane source using its NR and transfers them to ATG9 to the IM through its predicted beta-sheet-rich structure for membrane expansion. In Scheffersomyces stipitis (strain ATCC 58785 / CBS 6054 / NBRC 10063 / NRRL Y-11545) (Yeast), this protein is Autophagy-related protein 2 (ATG2).